The sequence spans 774 residues: Armadillo-like helical domain-containing protein 4 (774 aa).

The N-terminal stretch at 1–27 (MRGPIVLHICLAFCSLLLFSVATQCLA) is a signal peptide. Over 28-714 (FPKIERRREI…KDKAGYMSGM (687 aa)) the chain is Extracellular. A compositionally biased stretch (basic and acidic residues) spans 41 to 52 (HAEKGQSDKMNT). Disordered stretches follow at residues 41-63 (HAEKGQSDKMNTDDLENSSVTSK) and 97-135 (QPGQAGLMQTERPGVSTPTESGVPSAEEVFGSSQPERIS). A glycan (N-linked (GlcNAc...) asparagine) is linked at Asn57. Residue Asn189 is glycosylated (N-linked (GlcNAc...) asparagine). Residues 221 to 233 (KTEKFEADTDHRT) are compositionally biased toward basic and acidic residues. Disordered stretches follow at residues 221 to 275 (KTEK…QPLE) and 600 to 669 (ASYG…PGLE). The segment covering 258 to 275 (SQMTADNTQAAATKQPLE) has biased composition (polar residues). Acidic residues predominate over residues 607-651 (LESEEGQEDEDEEDEEDEDEEEEDEEEDEEDKDADSLDEGLDGDT). Residues 715 to 735 (LVPVGVGIAGALFILGALYSI) traverse the membrane as a helical segment. Over 736–774 (KVMNRRRRNGFKRHKRKQREFNSMQDRVMLLADSSEDEF) the chain is Cytoplasmic. A phosphoserine mark is found at Ser769 and Ser770.

As to quaternary structure, interacts with IL6ST; this interaction prevents IL6ST protein homodimerization and bridges ARMH4 with IL6R and STAT3 and therefore inhibits phosphorylation of STAT3 at 'Tyr-705'. Interacts (via cytoplasmic tail) with RICTOR; this interaction bridges ARMH4 to the mTORC2 complex and inhibits the mTORC2 kinase activity. As to expression, expressed in podocytes.

The protein localises to the membrane. In terms of biological role, may modulate immune response and may play a role in inflammation. Down-modulates STAT3 signaling throught direct interaction with IL6ST, resulting in the inhibition of phosphorylation of STAT3 at 'Tyr-705'. May negatively regulates AKT signaling by modulating the activity of mTORC2 complex through RICTOR interaction. This chain is Armadillo-like helical domain-containing protein 4, found in Homo sapiens (Human).